The primary structure comprises 328 residues: uncharacterized protein (328 aa).

The disordered stretch occupies residues 296-328 (APEGDLEDEIIEVDPEQPRDDPYRRLRTPPPGG). Acidic residues predominate over residues 299–310 (GDLEDEIIEVDP).

Possibly necessary for replication. This is an uncharacterized protein from Halobacterium sp. (strain GN101).